The following is a 475-amino-acid chain: Ribosomal protein uS12 methylthiotransferase RimO (475 aa).

The MTTase N-terminal domain occupies Asn-36–Lys-150. The [4Fe-4S] cluster site is built by Cys-45, Cys-81, Cys-113, Cys-185, Cys-189, and Cys-192. Residues Ser-171–Lys-403 enclose the Radical SAM core domain. In terms of domain architecture, TRAM spans Lys-406 to Ile-475.

The protein belongs to the methylthiotransferase family. RimO subfamily. [4Fe-4S] cluster is required as a cofactor.

The protein resides in the cytoplasm. It catalyses the reaction L-aspartate(89)-[ribosomal protein uS12]-hydrogen + (sulfur carrier)-SH + AH2 + 2 S-adenosyl-L-methionine = 3-methylsulfanyl-L-aspartate(89)-[ribosomal protein uS12]-hydrogen + (sulfur carrier)-H + 5'-deoxyadenosine + L-methionine + A + S-adenosyl-L-homocysteine + 2 H(+). Catalyzes the methylthiolation of an aspartic acid residue of ribosomal protein uS12. The sequence is that of Ribosomal protein uS12 methylthiotransferase RimO from Protochlamydia amoebophila (strain UWE25).